Here is a 160-residue protein sequence, read N- to C-terminus: Putative antiporter subunit mnhE2 (160 aa).

3 helical membrane passes run 22 to 42 (HFKF…IYIL), 55 to 75 (IWVA…SSIS), and 100 to 120 (SDWS…STVI).

It belongs to the CPA3 antiporters (TC 2.A.63) subunit E family. As to quaternary structure, may form a heterooligomeric complex that consists of seven subunits: mnhA2, mnhB2, mnhC2, mnhD2, mnhE2, mnhF2 and mnhG2.

The protein resides in the cell membrane. This is Putative antiporter subunit mnhE2 (mnhE2) from Staphylococcus aureus (strain USA300).